A 511-amino-acid chain; its full sequence is GMP synthase [glutamine-hydrolyzing] (511 aa).

The 191-residue stretch at 5–195 folds into the Glutamine amidotransferase type-1 domain; it reads AILVLDFGSQ…VFKICQAQIN (191 aa). The active-site Nucleophile is C82. Catalysis depends on residues H169 and E171. The region spanning 196–386 is the GMPS ATP-PPase domain; sequence WSLEGNLETI…LGIKKESLYR (191 aa). 223 to 229 serves as a coordination point for ATP; that stretch reads SGGTDSL.

Homodimer.

The enzyme catalyses XMP + L-glutamine + ATP + H2O = GMP + L-glutamate + AMP + diphosphate + 2 H(+). Its pathway is purine metabolism; GMP biosynthesis; GMP from XMP (L-Gln route): step 1/1. Catalyzes the synthesis of GMP from XMP. This Borreliella burgdorferi (strain N40) (Borrelia burgdorferi) protein is GMP synthase [glutamine-hydrolyzing] (guaA).